Here is a 132-residue protein sequence, read N- to C-terminus: Small ribosomal subunit protein uS8 (132 aa).

It belongs to the universal ribosomal protein uS8 family. In terms of assembly, part of the 30S ribosomal subunit. Contacts proteins S5 and S12.

Its function is as follows. One of the primary rRNA binding proteins, it binds directly to 16S rRNA central domain where it helps coordinate assembly of the platform of the 30S subunit. The polypeptide is Small ribosomal subunit protein uS8 (Psychrobacter cryohalolentis (strain ATCC BAA-1226 / DSM 17306 / VKM B-2378 / K5)).